The primary structure comprises 162 residues: MALRMWASSTANALRLSSATRPHFSPLSRCFSSVLDGLKYANSHEWVKHEGSVATIGITDHAQDHLGEVVFVDLPEAGGSVTKATGFGAVESVKATSDVNSPISGEIVEVNSKLSETPGLINSSPYEDGWMIKVKPSNPSELDSLMGAKEYTKFCEEEDAAH.

Residues 1–31 constitute a mitochondrion transit peptide; sequence MALRMWASSTANALRLSSATRPHFSPLSRCF. Residues 53 to 135 enclose the Lipoyl-binding domain; sequence VATIGITDHA…YEDGWMIKVK (83 aa). Position 94 is an N6-lipoyllysine (Lys-94).

This sequence belongs to the GcvH family. As to quaternary structure, the glycine cleavage system is composed of four proteins: P, T, L and H. The cofactor is (R)-lipoate.

Its subcellular location is the mitochondrion. In terms of biological role, the glycine cleavage system catalyzes the degradation of glycine. The H protein shuttles the methylamine group of glycine from the P protein to the T protein. This is Glycine cleavage system H protein, mitochondrial (GDCSH) from Flaveria anomala (Yellowtops).